The sequence spans 475 residues: Ribulose bisphosphate carboxylase large chain (475 aa).

Positions 1–2 (MS) are excised as a propeptide. P3 carries the post-translational modification N-acetylproline. The residue at position 14 (K14) is an N6,N6,N6-trimethyllysine. N123 and T173 together coordinate substrate. Residue K175 is the Proton acceptor of the active site. K177 serves as a coordination point for substrate. Positions 201, 203, and 204 each coordinate Mg(2+). K201 is modified (N6-carboxylysine). Residue H294 is the Proton acceptor of the active site. R295, H327, and S379 together coordinate substrate.

It belongs to the RuBisCO large chain family. Type I subfamily. As to quaternary structure, heterohexadecamer of 8 large chains and 8 small chains; disulfide-linked. The disulfide link is formed within the large subunit homodimers. It depends on Mg(2+) as a cofactor. The disulfide bond which can form in the large chain dimeric partners within the hexadecamer appears to be associated with oxidative stress and protein turnover.

It is found in the plastid. The protein resides in the chloroplast. The catalysed reaction is 2 (2R)-3-phosphoglycerate + 2 H(+) = D-ribulose 1,5-bisphosphate + CO2 + H2O. It catalyses the reaction D-ribulose 1,5-bisphosphate + O2 = 2-phosphoglycolate + (2R)-3-phosphoglycerate + 2 H(+). Functionally, ruBisCO catalyzes two reactions: the carboxylation of D-ribulose 1,5-bisphosphate, the primary event in carbon dioxide fixation, as well as the oxidative fragmentation of the pentose substrate in the photorespiration process. Both reactions occur simultaneously and in competition at the same active site. This is Ribulose bisphosphate carboxylase large chain from Liquidambar styraciflua (Sweetgum tree).